Here is a 164-residue protein sequence, read N- to C-terminus: Large ribosomal subunit protein bL9 (164 aa).

This sequence belongs to the bacterial ribosomal protein bL9 family.

In terms of biological role, binds to the 23S rRNA. The sequence is that of Large ribosomal subunit protein bL9 from Borrelia recurrentis (strain A1).